The chain runs to 442 residues: Histidinol dehydrogenase (442 aa).

The tract at residues 1-20 is disordered; it reads MLNVTDLRGQTPSKSDIRRA. NAD(+)-binding residues include tyrosine 129, glutamine 193, and asparagine 218. Positions 241, 263, and 266 each coordinate substrate. Residues glutamine 263 and histidine 266 each coordinate Zn(2+). Active-site proton acceptor residues include glutamate 332 and histidine 333. 4 residues coordinate substrate: histidine 333, aspartate 366, glutamate 420, and histidine 425. Position 366 (aspartate 366) interacts with Zn(2+). Histidine 425 lines the Zn(2+) pocket.

This sequence belongs to the histidinol dehydrogenase family. The cofactor is Zn(2+).

It catalyses the reaction L-histidinol + 2 NAD(+) + H2O = L-histidine + 2 NADH + 3 H(+). It functions in the pathway amino-acid biosynthesis; L-histidine biosynthesis; L-histidine from 5-phospho-alpha-D-ribose 1-diphosphate: step 9/9. Functionally, catalyzes the sequential NAD-dependent oxidations of L-histidinol to L-histidinaldehyde and then to L-histidine. The chain is Histidinol dehydrogenase from Corynebacterium glutamicum (strain ATCC 13032 / DSM 20300 / JCM 1318 / BCRC 11384 / CCUG 27702 / LMG 3730 / NBRC 12168 / NCIMB 10025 / NRRL B-2784 / 534).